We begin with the raw amino-acid sequence, 859 residues long: MITQLTRKIFGTKNDKLVKKYRQRAQKINELEAKYQVMSDEALKSAFTSLKESVQKGEKSLDDVLYDSFAITREASKRVLGMRHFDVQLVGGMVLHEGRIAEMKTGEGKTLVATLAVALNAMKGEGVHVVTVNDYLAKRDATEMGVLYSFLGYSVGVITGDLYGDSERLEQYSSDVVYGTNNEFGFDYLRDNMKYSLEEKVQKSHAFAIVDEVDSILIDEARTPLIISGPANRKLDNYKIANSVALSLQKEKHFTVDEKNRVILLTEEGIREAEKGFGVDNLYSIENAILSHHLDQALKANHLFAIDKDYVINNGEVVIVDEFTGRLSEGRRFSEGLHQALEAKEGVEIKEESQTLADITFQNYFRLYKKLAGMTGTAQTEASEFLQIYKLEVISIPTNVTVMRKDLNDLIYKTEREKFNAVIQKIKELNQKGQPVLVGTASIEKSELLHSLLQKERIPHTVLNAKQHAKEAEIIKDAGKKGAVTIATNMAGRGVDIKIDDEIRSLGGLYIIGTERHESRRIDNQLRGRSGRQGDPGASQFYLSLEDNLLRIFGSDKIKNIMDKLGLAEGEHIESGLVTRSVENAQKKVESMHFESRKHLLEYDDVANEQRKAVYKFRNELLDKSHDISHRIEDNRRDSLLNLLSKADILEGVEKEEYDLDRLLALFTEEYNTPISKELLEGKEYEALLLTLESHLKESYETKMSLVDENQKHDIERLIYLQVLDNAWREHLYLMDNLKTGIGLRGYNQKDPLVEYKKESYNLFIELIENIKFESMKALHSIQLRTKEEQEERQRAQEAAMQRLLSEMNAEANANLQFSHQPQSEVKVSRNDPCPCGSGKKYKNCCGQSGPKKGLLAQA.

ATP-binding positions include Gln88, 106–110, and Asp496; that span reads GEGKT. Residues 818 to 838 are disordered; the sequence is FSHQPQSEVKVSRNDPCPCGS. Zn(2+) contacts are provided by Cys834, Cys836, Cys845, and Cys846.

This sequence belongs to the SecA family. Monomer and homodimer. Part of the essential Sec protein translocation apparatus which comprises SecA, SecYEG and auxiliary proteins SecDF-YajC and YidC. Zn(2+) serves as cofactor.

The protein resides in the cell inner membrane. It localises to the cytoplasm. It catalyses the reaction ATP + H2O + cellular proteinSide 1 = ADP + phosphate + cellular proteinSide 2.. Its function is as follows. Part of the Sec protein translocase complex. Interacts with the SecYEG preprotein conducting channel. Has a central role in coupling the hydrolysis of ATP to the transfer of proteins into and across the cell membrane, serving as an ATP-driven molecular motor driving the stepwise translocation of polypeptide chains across the membrane. The protein is Protein translocase subunit SecA of Wolinella succinogenes (strain ATCC 29543 / DSM 1740 / CCUG 13145 / JCM 31913 / LMG 7466 / NCTC 11488 / FDC 602W) (Vibrio succinogenes).